A 399-amino-acid polypeptide reads, in one-letter code: Succinate--CoA ligase [ADP-forming] subunit beta (399 aa).

The ATP-grasp domain occupies 9 to 254 (KELLAKYGIG…ETEEDPAEVE (246 aa)). ATP contacts are provided by residues lysine 46, 53–55 (GRG), valine 112, and glutamate 117. Residues asparagine 209 and aspartate 223 each coordinate Mg(2+). Substrate contacts are provided by residues asparagine 274 and 331-333 (GIM).

It belongs to the succinate/malate CoA ligase beta subunit family. As to quaternary structure, heterotetramer of two alpha and two beta subunits. The cofactor is Mg(2+).

The catalysed reaction is succinate + ATP + CoA = succinyl-CoA + ADP + phosphate. It catalyses the reaction GTP + succinate + CoA = succinyl-CoA + GDP + phosphate. It functions in the pathway carbohydrate metabolism; tricarboxylic acid cycle; succinate from succinyl-CoA (ligase route): step 1/1. Its function is as follows. Succinyl-CoA synthetase functions in the citric acid cycle (TCA), coupling the hydrolysis of succinyl-CoA to the synthesis of either ATP or GTP and thus represents the only step of substrate-level phosphorylation in the TCA. The beta subunit provides nucleotide specificity of the enzyme and binds the substrate succinate, while the binding sites for coenzyme A and phosphate are found in the alpha subunit. This is Succinate--CoA ligase [ADP-forming] subunit beta from Erythrobacter litoralis (strain HTCC2594).